Reading from the N-terminus, the 224-residue chain is Envelope glycoprotein L (224 aa).

Residues 1-19 form the signal peptide; that stretch reads MGILGWVGLIAVGVLCVRG. The interaction with gH stretch occupies residues 20 to 161; sequence GLPSTEYVIR…FDYSRTRRCV (142 aa). In terms of domain architecture, gL alphaherpesvirus-type spans 23–201; it reads STEYVIRSRV…LTTPPPIIAT (179 aa). 2 cysteine pairs are disulfide-bonded: Cys-44-Cys-76 and Cys-149-Cys-160. Residues 161–224 form a disordered region; sequence VGRQDLGPTN…RRRRPHSRRL (64 aa). Residues 213-224 are compositionally biased toward basic residues; the sequence is KSRRRRPHSRRL.

It belongs to the herpesviridae glycoprotein L (gL) family. Alphaherpesvirinae gL subfamily. Interacts with glycoprotein H (gH); this interaction is necessary for the correct processing and cell surface expression of gH. The heterodimer gH/gL seems to interact with gB trimers during fusion.

It is found in the virion membrane. The protein resides in the host cell membrane. The protein localises to the host Golgi apparatus. Its subcellular location is the host trans-Golgi network. The heterodimer glycoprotein H-glycoprotein L is required for the fusion of viral and plasma membranes leading to virus entry into the host cell. Acts as a functional inhibitor of gH and maintains gH in an inhibited form. Upon binding to host integrins, gL dissociates from gH leading to activation of the viral fusion glycoproteins gB and gH. The chain is Envelope glycoprotein L from Human herpesvirus 1 (strain 17) (HHV-1).